The following is a 234-amino-acid chain: Small ribosomal subunit protein eS4 (234 aa).

The S4 RNA-binding domain occupies Met-43–Glu-106.

It belongs to the eukaryotic ribosomal protein eS4 family.

The polypeptide is Small ribosomal subunit protein eS4 (Nanoarchaeum equitans (strain Kin4-M)).